A 119-amino-acid polypeptide reads, in one-letter code: ATP-dependent Clp protease adapter protein ClpS (119 aa).

Positions Met1 to Asp24 are disordered.

The protein belongs to the ClpS family. In terms of assembly, binds to the N-terminal domain of the chaperone ClpA.

Its function is as follows. Involved in the modulation of the specificity of the ClpAP-mediated ATP-dependent protein degradation. The protein is ATP-dependent Clp protease adapter protein ClpS of Gluconobacter oxydans (strain 621H) (Gluconobacter suboxydans).